The primary structure comprises 217 residues: Large ribosomal subunit protein uL4c (217 aa).

Residues 51–85 (HRNRNAHTQTRGEVSGGGRKPWKQKGTGRARAGSN) form a disordered region.

This sequence belongs to the universal ribosomal protein uL4 family. Part of the 50S ribosomal subunit.

It localises to the plastid. It is found in the chloroplast. Functionally, probably binds the 23S rRNA. The chain is Large ribosomal subunit protein uL4c (rpl4) from Gracilaria tenuistipitata var. liui (Red alga).